A 361-amino-acid polypeptide reads, in one-letter code: MDRPDATFTLAYVVFALCFVFTPNEFRSAGFTVQHMFSEWLGSEDISFIQHHIRRTTLTVLFHSFLPLGYYIGMCFAAPEQNLMYVHHASQGWQMYFGLSLVIQLLSCALAFYWSRRGWANHPICKALSVHALPQSSWRAVASSINTEFRRIDKFASGSPSARVIVTDTWVMKVTTYSLHVALHQDCHLTVTDSKHHSLSPDLNTPVQIVTITVGSINPRVKSFDIRLKSTEYAELQEKLHAPIRNAANVVIHLTMSELFLETFKSYVRMNVVYKCPSGQELEPCIGCMQVNANVKLLCLCQSDEGECQQCYCRPMWCLTCMGKWFASRQDQQQPETWLSSRVPCPTCRAKFCILDVCPIE.

At 1-6 (MDRPDA) the chain is on the lumenal side. The helical transmembrane segment at 7 to 27 (TFTLAYVVFALCFVFTPNEFR) threads the bilayer. Residues 28 to 56 (SAGFTVQHMFSEWLGSEDISFIQHHIRRT) are Cytoplasmic-facing. A helical transmembrane segment spans residues 57 to 77 (TLTVLFHSFLPLGYYIGMCFA). Residues 78-94 (APEQNLMYVHHASQGWQ) are Lumenal-facing. The helical transmembrane segment at 95-115 (MYFGLSLVIQLLSCALAFYWS) threads the bilayer. Over 116–361 (RRGWANHPIC…FCILDVCPIE (246 aa)) the chain is Cytoplasmic. The RING-type; degenerate zinc-finger motif lies at 285 to 349 (CIGCMQVNAN…SSRVPCPTCR (65 aa)).

This sequence belongs to the TMEM129 family. In terms of assembly, integral component of ER-resident dislocation complexes.

It is found in the endoplasmic reticulum membrane. The enzyme catalyses S-ubiquitinyl-[E2 ubiquitin-conjugating enzyme]-L-cysteine + [acceptor protein]-L-lysine = [E2 ubiquitin-conjugating enzyme]-L-cysteine + N(6)-ubiquitinyl-[acceptor protein]-L-lysine.. It participates in protein modification; protein ubiquitination. Functionally, E3 ubiquitin-protein ligase involved in ER-associated protein degradation, preferentially associates with the E2 enzyme UBE2J2. The protein is E3 ubiquitin-protein ligase TM129 (tmem129) of Danio rerio (Zebrafish).